The following is a 194-amino-acid chain: dCTP deaminase (194 aa).

Residues 110-115, aspartate 128, 136-138, tyrosine 171, lysine 178, and glutamine 182 contribute to the dCTP site; these read RSSLAR and VLE. The active-site Proton donor/acceptor is the glutamate 138.

It belongs to the dCTP deaminase family. As to quaternary structure, homotrimer.

The enzyme catalyses dCTP + H2O + H(+) = dUTP + NH4(+). It functions in the pathway pyrimidine metabolism; dUMP biosynthesis; dUMP from dCTP (dUTP route): step 1/2. In terms of biological role, catalyzes the deamination of dCTP to dUTP. The chain is dCTP deaminase from Glaesserella parasuis serovar 5 (strain SH0165) (Haemophilus parasuis).